We begin with the raw amino-acid sequence, 494 residues long: UPF0371 protein SPG_0310 (494 aa).

This sequence belongs to the UPF0371 family.

The protein is UPF0371 protein SPG_0310 of Streptococcus pneumoniae serotype 19F (strain G54).